The chain runs to 310 residues: 300 kDa antigen AG231 (310 aa).

A 4 X 6 AA tandem repeats of V-V-T-G-S-C region spans residues 1–23 (VTGSCVVTGSCVVTDSCVVTGSC). Positions 29–106 (VTTQESVTTQ…TQEPVTVEEH (78 aa)) are 13 X 6 AA tandem repeats of V-V-[TI]-[QE]-E-[PH]. Residues 53–101 (VTIEEPVTTQEPVTIEEPVTTQEPVTTQEPVTTQEPVTTQEPVTTQEPV) show a composition bias toward low complexity. Residues 53–310 (VTIEEPVTTQ…FGRGNKNDKK (258 aa)) form a disordered region. Composition is skewed to basic and acidic residues over residues 103 to 114 (VEEHIDEKKGSE) and 147 to 160 (NKND…KKPS). Residues 107–152 (IDEKKGSEGDNISLSSLSEETEEKSHTKKKKSSWLKFGRGNKNDKK) form a 45 AA repeat 1 repeat. Residues 176 to 190 (TDSQISVNAQDSVTI) show a composition bias toward polar residues. A 13 X 6 AA approximate tandem repeats region spans residues 188–265 (VTIQEPTATQ…TQEPSTTQEH (78 aa)). The segment covering 191 to 235 (QEPTATQEPPTTQELTATQEPTTTQETVTEQEPTTTQETVTAQEP) has biased composition (low complexity). Residues 236–263 (ITTQEPVTAQEPVTTQELIATQEPSTTQ) are compositionally biased toward polar residues. Basic and acidic residues predominate over residues 264–273 (EHADEKKASE). The stretch at 266 to 310 (ADEKKASEGDNISLSRLSEETEEKSHTKKKSSWLKFGRGNKNDKK) is one 45 AA repeat 2 repeat.

The polypeptide is 300 kDa antigen AG231 (FIRA) (Plasmodium falciparum (isolate FC27 / Papua New Guinea)).